A 464-amino-acid polypeptide reads, in one-letter code: Sushi-repeat-containing protein SRPX (464 aa).

Residues 1-30 (MGSPGLRPELLLPQVLPLLLALLHVLPSQG) form the signal peptide. S34 carries O-linked (Xyl...) (chondroitin sulfate) serine glycosylation. Cystine bridges form between C57–C85, C69–C103, C89–C115, C120–C161, and C147–C174. Sushi domains lie at 57-117 (CSPI…ICKQ) and 118-176 (KRCP…SCVD). Residues 177–259 (LEPPRIKCPS…TCKFRVKVRV (83 aa)) form the HYR domain. The Sushi 3 domain maps to 260–319 (RRCGKLNAPENGYMKCSSDGDNYGATCEFSCIGGYELQGSPARVCQSNLAWSGTEPSCAA). Cystine bridges form between C262–C304 and C290–C317.

The chain is Sushi-repeat-containing protein SRPX (Srpx) from Mus musculus (Mouse).